A 323-amino-acid polypeptide reads, in one-letter code: MSRHIQYSIVVPVYNEELVIHETYQRLKEVMDQTKENYELLFVNDGSKDRSIEILREHSLIDPRVKIIDFSRNFGHQIAITAGMDYAQGNAIVVIDADLQDPPELILEMIEKWKEGYEVVYAVRTKRKGETFFKKQTAAMFYRLLSGMTDIDIPIDTGDFRLMDRKVCDEMKRLKEKNPFVRGLVSWVGFKQTAVEYVRDERLAGETKYPLKKMLKLSMDGITTFSHKPLKLASYAGILMSGTGFLYMFIVLYLKLFTDSTITGWSSLIVIQLLFSGIVLLILGVIGEYIGRIYDEAKDRPLYIVQKSYGIENKRLYRDQHMS.

Helical transmembrane passes span 232–252 and 267–287; these read LASYAGILMSGTGFLYMFIVL and SLIVIQLLFSGIVLLILGVIG.

It belongs to the glycosyltransferase 2 family. GtrB subfamily.

It localises to the cell membrane. This is an uncharacterized protein from Bacillus subtilis (strain 168).